The primary structure comprises 393 residues: G protein-activated inward rectifier potassium channel 3 (393 aa).

The interval 1–23 (MAQENAAFSPGSEEPPRRRGRQR) is disordered. Residues 1-57 (MAQENAAFSPGSEEPPRRRGRQRYVEKDGRCNVQQGNVRETYRYLTDLFTTLVDLQW) lie on the Cytoplasmic side of the membrane. A helical membrane pass occupies residues 58–82 (RLSLLFFVLAYALTWLFFGAIWWLI). Residues 83–106 (AYGRGDLEHLEDTAWTPCVNNLNG) are Extracellular-facing. An intramembrane region (helical; Pore-forming) is located at residues 107-118 (FVAAFLFSIETE). Residues 119–125 (TTIGYGH) constitute an intramembrane region (pore-forming). The Selectivity filter motif lies at 120-125 (TIGYGH). Over 126-134 (RVITDQCPE) the chain is Extracellular. A helical membrane pass occupies residues 135-156 (GIVLLLLQAILGSMVNAFMVGC). The Cytoplasmic portion of the chain corresponds to 157-393 (MFVKISQPNK…LPPPESESKV (237 aa)). The interval 360 to 393 (KVEEEGAGEGAGAGDGADKEQNGCLPPPESESKV) is disordered. Residues 384 to 393 (LPPPESESKV) are compositionally biased toward pro residues. The short motif at 390–393 (ESKV) is the PDZ-binding element.

Belongs to the inward rectifier-type potassium channel (TC 1.A.2.1) family. KCNJ9 subfamily. As to quaternary structure, associates with KCNJ3/GIRK1 to form a G-protein-activated heteromultimer pore-forming unit. Interacts (via PDZ-binding motif) with SNX27 (via PDZ domain); the interaction is required when endocytosed to prevent degradation in lysosomes and promote recycling to the plasma membrane.

It is found in the membrane. The catalysed reaction is K(+)(in) = K(+)(out). This receptor is controlled by G proteins. Inward rectifier potassium channels are characterized by a greater tendency to allow potassium to flow into the cell rather than out of it. Their voltage dependence is regulated by the concentration of extracellular potassium; as external potassium is raised, the voltage range of the channel opening shifts to more positive voltages. The inward rectification is mainly due to the blockage of outward current by internal magnesium. Unable to produce channel activity when expressed alone but forms a functional channel in association with KCNJ3/GIRK1. This chain is G protein-activated inward rectifier potassium channel 3 (Kcnj9), found in Rattus norvegicus (Rat).